The chain runs to 204 residues: Probable nicotinate-nucleotide adenylyltransferase (204 aa).

The protein belongs to the NadD family.

The enzyme catalyses nicotinate beta-D-ribonucleotide + ATP + H(+) = deamido-NAD(+) + diphosphate. Its pathway is cofactor biosynthesis; NAD(+) biosynthesis; deamido-NAD(+) from nicotinate D-ribonucleotide: step 1/1. Functionally, catalyzes the reversible adenylation of nicotinate mononucleotide (NaMN) to nicotinic acid adenine dinucleotide (NaAD). The protein is Probable nicotinate-nucleotide adenylyltransferase of Methylacidiphilum infernorum (isolate V4) (Methylokorus infernorum (strain V4)).